The sequence spans 330 residues: Low affinity immunoglobulin gamma Fc region receptor II (330 aa).

Positions 1–29 (MESNWTVHVFSRTLCHMLLWTAVLNLAAG) are cleaved as a signal peptide. At 30–210 (THDLPKAVVK…QGPKSSRSLP (181 aa)) the chain is on the extracellular side. Ig-like C2-type domains are found at residues 50 to 106 (EDTV…QTRL) and 131 to 189 (GETI…LGRT). Disulfide bonds link Cys57–Cys99 and Cys138–Cys182. 4 N-linked (GlcNAc...) asparagine glycosylation sites follow: Asn65, Asn92, Asn166, and Asn173. Residues 211-231 (VLTIVAAVTGIAVAAIVIILV) form a helical membrane-spanning segment. Over 232 to 330 (SLVYLKKKQV…ETEHDYQNHI (99 aa)) the chain is Cytoplasmic. Residues 261–330 (VGEYRQPSGG…ETEHDYQNHI (70 aa)) form a disordered region. Tyr290 carries the phosphotyrosine modification. The ITIM motif signature appears at 307–312 (ITYSLL). Phosphotyrosine; by SRC-type Tyr-kinases is present on Tyr309. Tyr326 is subject to Phosphotyrosine.

Interacts with FGR. Interacts with LYN. In terms of processing, glycosylated. Post-translationally, when coaggregated to BCR, isoform IIB1 and isoform IIB1' become tyrosine phosphorylated and bind to the SH2 domains of the protein tyrosine phosphatase PTPC1. Phosphorylated by SRC-type Tyr-kinases such as LYN, BLK, FYN and SYK. As to expression, widely expressed by cells of hemopoietic origin. The isoforms are differentially expressed. Isoform IIB1 is preferentially expressed by cells of the lymphoid lineage, isoform IIB2 by cells of the myeloid lineage, and isoform IIB3 is released by macrophages and is present in the serum. Isoform IIB1' is expressed in myeloid and lymphoid cell lines, in normal spleen cells, and in resting or LPS-activated B-cells but is not detected in mesenteric lymph node cells.

It is found in the cell membrane. The protein localises to the cytoplasm. The protein resides in the cytoskeleton. Its subcellular location is the secreted. In terms of biological role, receptor for the Fc region of complexed immunoglobulins gamma. Low affinity receptor. Involved in a variety of effector and regulatory functions such as phagocytosis of antigen-antibody complexes from the circulation and modulation of antibody production by B-cells. Isoform IIB1 and isoform IIB1' form caps but fail to mediate endocytosis or phagocytosis. Isoform IIB2 can mediate the endocytosis of soluble immune complexes via clathrin-coated pits. Isoform IIB1 and isoform IIB2 can down-regulate B-cell, T-cell, and mast cell activation when coaggregated to B-cell receptors for AG (BCR), T-cell receptors for AG (TCR), and Fc receptors, respectively. In Mus musculus (Mouse), this protein is Low affinity immunoglobulin gamma Fc region receptor II (Fcgr2).